The following is a 185-amino-acid chain: GYLGAPAVVAPGAPLAARAYAAPAYAAPLARYAAPVARAYAAPVARAYAPAVAAAPAAVEYDPHPQYSFAYNVQDAHTGDSKTQHESRDGDVVQGSYSLAEPDGSIRVVDYTADPVNGFNAVVHKEAGAHPAAAPVAVAAPVAHAPVAVAAPVRAYAAPLARAAYAAPIARASYGPALAYGGAYH.

7 tandem repeats follow at residues 21–24, 33–36, 41–44, 54–57, 133–136, 139–142, and 150–153. The Chitin-binding type R&amp;R domain occupies 64 to 134; it reads HPQYSFAYNV…KEAGAHPAAA (71 aa).

Component of the cuticle of migratory locust which contains more than 100 different structural proteins. In Locusta migratoria (Migratory locust), this protein is Cuticle protein 18.6, isoform A.